We begin with the raw amino-acid sequence, 659 residues long: Delta(6)-protoilludene synthase (659 aa).

Residues aspartate 91, asparagine 227, serine 231, and glutamate 235 each coordinate Mg(2+). Residues 91 to 95 (DEHTD) carry the DDXXD motif motif. (2E,6E)-farnesyl diphosphate contacts are provided by arginine 316 and tyrosine 317. Positions 528–586 (PQFSKTSGAPNGAHTPTTTNGSIKSNGFVSGDTNGHANGNGHVQTRSSTPSSSSSSTSS) are disordered. Residues 530-573 (FSKTSGAPNGAHTPTTTNGSIKSNGFVSGDTNGHANGNGHVQTR) show a composition bias toward polar residues. Positions 574 to 586 (SSTPSSSSSSTSS) are enriched in low complexity.

The protein belongs to the terpene synthase family. It depends on Mg(2+) as a cofactor.

It carries out the reaction (2E,6E)-farnesyl diphosphate = Delta(6)-protoilludene + diphosphate. Its function is as follows. Terpene cyclase that catalyzes the cyclization of farnesyl diphosphate (FPP) to delta(6)-protoilludene. The chain is Delta(6)-protoilludene synthase from Cyclocybe aegerita (Black poplar mushroom).